A 154-amino-acid chain; its full sequence is Small ribosomal subunit protein uS7c (154 aa).

The protein belongs to the universal ribosomal protein uS7 family. As to quaternary structure, part of the 30S ribosomal subunit.

It is found in the plastid. It localises to the chloroplast. Functionally, one of the primary rRNA binding proteins, it binds directly to 16S rRNA where it nucleates assembly of the head domain of the 30S subunit. This is Small ribosomal subunit protein uS7c (rps7) from Pleurastrum terricola (Filamentous green alga).